The following is an 87-amino-acid chain: Small ribosomal subunit protein bS16 (87 aa).

It belongs to the bacterial ribosomal protein bS16 family.

This chain is Small ribosomal subunit protein bS16, found in Ehrlichia ruminantium (strain Gardel).